Reading from the N-terminus, the 182-residue chain is ATP synthase subunit delta 2 (182 aa).

This sequence belongs to the ATPase delta chain family. In terms of assembly, F-type ATPases have 2 components, F(1) - the catalytic core - and F(0) - the membrane proton channel. F(1) has five subunits: alpha(3), beta(3), gamma(1), delta(1), epsilon(1). F(0) has three main subunits: a(1), b(2) and c(10-14). The alpha and beta chains form an alternating ring which encloses part of the gamma chain. F(1) is attached to F(0) by a central stalk formed by the gamma and epsilon chains, while a peripheral stalk is formed by the delta and b chains.

It is found in the cell inner membrane. Its function is as follows. F(1)F(0) ATP synthase produces ATP from ADP in the presence of a proton or sodium gradient. F-type ATPases consist of two structural domains, F(1) containing the extramembraneous catalytic core and F(0) containing the membrane proton channel, linked together by a central stalk and a peripheral stalk. During catalysis, ATP synthesis in the catalytic domain of F(1) is coupled via a rotary mechanism of the central stalk subunits to proton translocation. Functionally, this protein is part of the stalk that links CF(0) to CF(1). It either transmits conformational changes from CF(0) to CF(1) or is implicated in proton conduction. The sequence is that of ATP synthase subunit delta 2 from Photobacterium profundum (strain SS9).